The primary structure comprises 165 residues: NADH-quinone oxidoreductase subunit I (165 aa).

4Fe-4S ferredoxin-type domains lie at 57–86 and 96–125; these read RRYE…IESE and TRYD…ETHI. Residues Cys-66, Cys-69, Cys-72, Cys-76, Cys-105, Cys-108, Cys-111, and Cys-115 each contribute to the [4Fe-4S] cluster site.

It belongs to the complex I 23 kDa subunit family. NDH-1 is composed of 14 different subunits. Subunits NuoA, H, J, K, L, M, N constitute the membrane sector of the complex. Requires [4Fe-4S] cluster as cofactor.

The protein resides in the cell inner membrane. The catalysed reaction is a quinone + NADH + 5 H(+)(in) = a quinol + NAD(+) + 4 H(+)(out). Its function is as follows. NDH-1 shuttles electrons from NADH, via FMN and iron-sulfur (Fe-S) centers, to quinones in the respiratory chain. The immediate electron acceptor for the enzyme in this species is believed to be ubiquinone. Couples the redox reaction to proton translocation (for every two electrons transferred, four hydrogen ions are translocated across the cytoplasmic membrane), and thus conserves the redox energy in a proton gradient. In Methylibium petroleiphilum (strain ATCC BAA-1232 / LMG 22953 / PM1), this protein is NADH-quinone oxidoreductase subunit I.